Reading from the N-terminus, the 194-residue chain is Probable GTP-binding protein EngB (194 aa).

In terms of domain architecture, EngB-type G spans 22 to 194 (LFLEVAFAGR…WQELDTMLNP (173 aa)). GTP is bound by residues 30-37 (GRSNVGKS), 57-61 (GCTQL), 75-78 (DLPG), 142-145 (TKAD), and 173-175 (FSS). Residues serine 37 and threonine 59 each contribute to the Mg(2+) site.

Belongs to the TRAFAC class TrmE-Era-EngA-EngB-Septin-like GTPase superfamily. EngB GTPase family. It depends on Mg(2+) as a cofactor.

In terms of biological role, necessary for normal cell division and for the maintenance of normal septation. This Desulforapulum autotrophicum (strain ATCC 43914 / DSM 3382 / VKM B-1955 / HRM2) (Desulfobacterium autotrophicum) protein is Probable GTP-binding protein EngB.